Here is a 431-residue protein sequence, read N- to C-terminus: FAD-dependent monooxygenase nodY1 (431 aa).

A signal peptide spans 1 to 21 (MASTGVSVIVVGLGLAGLTTA). Residues Glu-35 and Arg-110 each contribute to the FAD site. Arg-188 is an active-site residue. Asp-313 is an FAD binding site.

The protein belongs to the paxM FAD-dependent monooxygenase family. FAD serves as cofactor.

It participates in secondary metabolite biosynthesis. In terms of biological role, FAD-dependent monooxygenase; part of the gene cluster that mediates the biosynthesis of the indole diterpenes nodulisporic acids (NA). Nodulisporic acid A (NAA) and its chemically modified derivatives are of particular significance because of their highly potent insecticidal activity against blood-feeding arthropods and lack of observable adverse effects on mammals, in particular the tremogenicity associated with the paspaline-derived IDTs is not observed. The geranylgeranyl diphosphate (GGPP) synthase ggs1, localized outside of the cluster, is proposed to catalyze the first step in nodulisporic acid biosynthesis via conversion of farnesyl pyrophosphate and isopentyl pyrophosphate into geranylgeranyl pyrophosphate (GGPP). Condensation of indole-3-glycerol phosphate with GGPP by the prenyl transferase nodC then forms 3-geranylgeranylindole (3-GGI). Epoxidation by the FAD-dependent monooxygenase nodM leads to a single-epoxidized-GGI that is substrate of the terpene cyclase nodB for cyclization to yield emindole SB. The terminal methyl carbon, C28, of emindole SB is then oxidized by the cytochrome P450 monooxygenase nodW to produce nodulisporic acid F (NAF), the pentacyclic core of NAA. NAF is converted to nodulisporic acid E (NAE) via prenylation. This step is probably performed by one of the indole diterpene prenyltransferases nodD1 or nodD2. Several oxidation steps performed by the FAD-linked oxidoreductase nodO and one of the cytochrome P450 monooxygenase nodR, nodX or nodZ further convert NAE to nodulisporic acid D (NAD). NAD is substrate of cytochrome P450 monooxygenase nodJ to produce the precursor of nodulisporic acid C (NAC), converted to NAC by one of the indole diterpene prenyltransferases nodD1 or nodD2. The FAD-dependent monooxygenase nodY2 then oxidizes NAC to nodulisporic acid B (NAB). Finally NAB is converted to NAA by one of the cytochrome P450 monooxygenases nodR, nodX or nodZ. This Hypoxylon pulicicidum protein is FAD-dependent monooxygenase nodY1.